The following is a 267-amino-acid chain: Orotidine 5'-phosphate decarboxylase (267 aa).

K93 serves as the catalytic Proton donor.

The protein belongs to the OMP decarboxylase family. Type 2 subfamily.

It carries out the reaction orotidine 5'-phosphate + H(+) = UMP + CO2. Its pathway is pyrimidine metabolism; UMP biosynthesis via de novo pathway; UMP from orotate: step 2/2. The sequence is that of Orotidine 5'-phosphate decarboxylase from Halobacterium salinarum (strain ATCC 29341 / DSM 671 / R1).